The chain runs to 270 residues: SPbeta prophage-derived DNA ligase-like protein LigB (270 aa).

Lys-25 functions as the N6-AMP-lysine intermediate in the catalytic mechanism.

This sequence belongs to the ATP-dependent DNA ligase family.

The protein is SPbeta prophage-derived DNA ligase-like protein LigB (ligB) of Bacillus subtilis (strain 168).